We begin with the raw amino-acid sequence, 99 residues long: Large ribosomal subunit protein eL21 (99 aa).

This sequence belongs to the eukaryotic ribosomal protein eL21 family.

The protein is Large ribosomal subunit protein eL21 of Staphylothermus marinus (strain ATCC 43588 / DSM 3639 / JCM 9404 / F1).